The sequence spans 130 residues: Putative ankyrin repeat protein R886 (130 aa).

ANK repeat units lie at residues 21–50 (NYDRTIINSSEYGNFEIVKYLIDNGADITA), 54–83 (YGFTPLDLSSKNGHYEIVKLLVECRASIIK), and 85–113 (DNLTLILASENGHIKIVKLLVENGADIRY).

The protein is Putative ankyrin repeat protein R886 of Acanthamoeba polyphaga (Amoeba).